The chain runs to 290 residues: Dehydrodolichyl diphosphate synthase CPT3 (290 aa).

The active site involves aspartate 42.

It belongs to the UPP synthase family. It depends on Mg(2+) as a cofactor. In terms of tissue distribution, expressed in leaf trichomes and stem trichomes. Expressed at low levels in young leaves, stems and old leaves.

It is found in the cytoplasm. The protein resides in the cytosol. It catalyses the reaction n isopentenyl diphosphate + (2E,6E)-farnesyl diphosphate = a di-trans,poly-cis-polyprenyl diphosphate + n diphosphate. Catalyzes cis-prenyl chain elongation to produce the polyprenyl backbone of dolichol, a glycosyl carrier-lipid required for the biosynthesis of several classes of glycoprotein. The protein is Dehydrodolichyl diphosphate synthase CPT3 of Solanum lycopersicum (Tomato).